Consider the following 371-residue polypeptide: UDP-N-acetylglucosamine--N-acetylmuramyl-(pentapeptide) pyrophosphoryl-undecaprenol N-acetylglucosamine transferase (371 aa).

Residues 10 to 12 (TGG), N124, R166, S196, and Q301 each bind UDP-N-acetyl-alpha-D-glucosamine.

The protein belongs to the glycosyltransferase 28 family. MurG subfamily.

The protein localises to the cell membrane. It catalyses the reaction di-trans,octa-cis-undecaprenyl diphospho-N-acetyl-alpha-D-muramoyl-L-alanyl-D-glutamyl-meso-2,6-diaminopimeloyl-D-alanyl-D-alanine + UDP-N-acetyl-alpha-D-glucosamine = di-trans,octa-cis-undecaprenyl diphospho-[N-acetyl-alpha-D-glucosaminyl-(1-&gt;4)]-N-acetyl-alpha-D-muramoyl-L-alanyl-D-glutamyl-meso-2,6-diaminopimeloyl-D-alanyl-D-alanine + UDP + H(+). Its pathway is cell wall biogenesis; peptidoglycan biosynthesis. In terms of biological role, cell wall formation. Catalyzes the transfer of a GlcNAc subunit on undecaprenyl-pyrophosphoryl-MurNAc-pentapeptide (lipid intermediate I) to form undecaprenyl-pyrophosphoryl-MurNAc-(pentapeptide)GlcNAc (lipid intermediate II). This is UDP-N-acetylglucosamine--N-acetylmuramyl-(pentapeptide) pyrophosphoryl-undecaprenol N-acetylglucosamine transferase from Moorella thermoacetica (strain ATCC 39073 / JCM 9320).